We begin with the raw amino-acid sequence, 288 residues long: Probable branched-chain-amino-acid aminotransferase (288 aa).

K153 is modified (N6-(pyridoxal phosphate)lysine).

This sequence belongs to the class-IV pyridoxal-phosphate-dependent aminotransferase family. Pyridoxal 5'-phosphate is required as a cofactor.

The enzyme catalyses L-leucine + 2-oxoglutarate = 4-methyl-2-oxopentanoate + L-glutamate. It carries out the reaction L-isoleucine + 2-oxoglutarate = (S)-3-methyl-2-oxopentanoate + L-glutamate. The catalysed reaction is L-valine + 2-oxoglutarate = 3-methyl-2-oxobutanoate + L-glutamate. The protein operates within amino-acid biosynthesis; L-isoleucine biosynthesis; L-isoleucine from 2-oxobutanoate: step 4/4. Its pathway is amino-acid biosynthesis; L-leucine biosynthesis; L-leucine from 3-methyl-2-oxobutanoate: step 4/4. It participates in amino-acid biosynthesis; L-valine biosynthesis; L-valine from pyruvate: step 4/4. Acts on leucine, isoleucine and valine. The protein is Probable branched-chain-amino-acid aminotransferase (ilvE) of Rickettsia typhi (strain ATCC VR-144 / Wilmington).